Here is a 446-residue protein sequence, read N- to C-terminus: UPF0597 protein DvMF_1488 (446 aa).

Belongs to the UPF0597 family.

The chain is UPF0597 protein DvMF_1488 from Nitratidesulfovibrio vulgaris (strain DSM 19637 / Miyazaki F) (Desulfovibrio vulgaris).